The chain runs to 378 residues: Acetylornithine deacetylase (378 aa).

Residue His-76 participates in Zn(2+) binding. Residue Asp-78 is part of the active site. Asp-108 provides a ligand contact to Zn(2+). The active site involves Glu-140. Positions 141, 165, and 351 each coordinate Zn(2+).

It belongs to the peptidase M20A family. ArgE subfamily. As to quaternary structure, homodimer. It depends on Zn(2+) as a cofactor. Co(2+) is required as a cofactor. The cofactor is glutathione.

The protein resides in the cytoplasm. It carries out the reaction N(2)-acetyl-L-ornithine + H2O = L-ornithine + acetate. It participates in amino-acid biosynthesis; L-arginine biosynthesis; L-ornithine from N(2)-acetyl-L-ornithine (linear): step 1/1. Its function is as follows. Catalyzes the hydrolysis of the amide bond of N(2)-acetylated L-amino acids. Cleaves the acetyl group from N-acetyl-L-ornithine to form L-ornithine, an intermediate in L-arginine biosynthesis pathway, and a branchpoint in the synthesis of polyamines. The sequence is that of Acetylornithine deacetylase from Vibrio campbellii (strain ATCC BAA-1116).